A 348-amino-acid chain; its full sequence is Sorbitol dehydrogenase (348 aa).

Zn(2+) is bound by residues Cys-40, His-65, and Glu-66. NAD(+) contacts are provided by residues Ile-179, Asp-199, Arg-204, 269 to 271 (VGI), and 293 to 295 (SFR). Residue Arg-295 coordinates substrate.

The protein belongs to the zinc-containing alcohol dehydrogenase family. As to quaternary structure, homotetramer. Requires Zn(2+) as cofactor.

It carries out the reaction xylitol + NAD(+) = D-xylulose + NADH + H(+). The catalysed reaction is L-iditol + NAD(+) = keto-L-sorbose + NADH + H(+). It catalyses the reaction keto-D-fructose + NADH + H(+) = D-sorbitol + NAD(+). Functionally, polyol dehydrogenase that catalyzes the reversible NAD(+)-dependent oxidation of various sugar alcohols. Is active with xylitol, L-iditol and D-sorbitol (D-glucitol) as substrates, leading to the C2-oxidized products D-xylulose, L-sorbose and D-fructose, respectively. Is a key enzyme in the polyol pathway that interconverts glucose and fructose via sorbitol, which constitutes an important alternate route for glucose metabolism. This is Sorbitol dehydrogenase (SDH) from Bombyx mori (Silk moth).